The primary structure comprises 316 residues: 1-phosphofructokinase (316 aa).

ATP-binding positions include 225–230 (SMGAGG) and 256–257 (GD). D257 functions as the Proton acceptor in the catalytic mechanism.

Belongs to the carbohydrate kinase PfkB family.

It carries out the reaction beta-D-fructose 1-phosphate + ATP = beta-D-fructose 1,6-bisphosphate + ADP + H(+). Functionally, catalyzes the ATP-dependent phosphorylation of fructose-l-phosphate to fructose-l,6-bisphosphate. The sequence is that of 1-phosphofructokinase from Rhodobacter capsulatus (Rhodopseudomonas capsulata).